The following is a 504-amino-acid chain: D-alanine--D-alanyl carrier protein ligase (504 aa).

152-153 (TS) serves as a coordination point for ATP. D-alanine is bound at residue D197. Residue 292 to 297 (NTYGPT) participates in ATP binding. V301 is a D-alanine binding site. ATP contacts are provided by residues D383, 394-397 (YNGR), and K492. K492 lines the D-alanine pocket.

It belongs to the ATP-dependent AMP-binding enzyme family. DltA subfamily.

Its subcellular location is the cytoplasm. It carries out the reaction holo-[D-alanyl-carrier protein] + D-alanine + ATP = D-alanyl-[D-alanyl-carrier protein] + AMP + diphosphate. It participates in cell wall biogenesis; lipoteichoic acid biosynthesis. Catalyzes the first step in the D-alanylation of lipoteichoic acid (LTA), the activation of D-alanine and its transfer onto the D-alanyl carrier protein (Dcp) DltC. In an ATP-dependent two-step reaction, forms a high energy D-alanyl-AMP intermediate, followed by transfer of the D-alanyl residue as a thiol ester to the phosphopantheinyl prosthetic group of the Dcp. D-alanylation of LTA plays an important role in modulating the properties of the cell wall in Gram-positive bacteria, influencing the net charge of the cell wall. This chain is D-alanine--D-alanyl carrier protein ligase, found in Bacillus cereus (strain B4264).